The sequence spans 164 residues: Pyruvoyl-dependent arginine decarboxylase (164 aa).

S52 bears the Pyruvic acid (Ser) mark.

It belongs to the PdaD family. Pyruvate serves as cofactor.

The enzyme catalyses L-arginine + H(+) = agmatine + CO2. The chain is Pyruvoyl-dependent arginine decarboxylase from Methanococcus vannielii (strain ATCC 35089 / DSM 1224 / JCM 13029 / OCM 148 / SB).